The chain runs to 30 residues: Photosystem I reaction center subunit XII (30 aa).

A helical transmembrane segment spans residues valine 7 to serine 27.

This sequence belongs to the PsaM family.

It localises to the plastid. The protein localises to the chloroplast thylakoid membrane. The polypeptide is Photosystem I reaction center subunit XII (Cyanidium caldarium (Red alga)).